Consider the following 689-residue polypeptide: Glycine--tRNA ligase beta subunit (689 aa).

It belongs to the class-II aminoacyl-tRNA synthetase family. As to quaternary structure, tetramer of two alpha and two beta subunits.

Its subcellular location is the cytoplasm. The enzyme catalyses tRNA(Gly) + glycine + ATP = glycyl-tRNA(Gly) + AMP + diphosphate. The protein is Glycine--tRNA ligase beta subunit of Enterobacter sp. (strain 638).